We begin with the raw amino-acid sequence, 601 residues long: Glutathione-regulated potassium-efflux system protein KefB (601 aa).

The next 13 helical transmembrane spans lie at 4-24, 29-49, 55-75, 87-107, 111-131, 152-172, 177-197, 207-227, 230-250, 262-282, 284-304, 324-344, and 356-376; these read ADLL…VPLA, IGAV…GLGF, EILH…GLEL, IFGV…GLLM, FLWQ…TAMA, VLLF…LLAG, HFDW…LIGG, FIAA…LVLS, LFMD…GVLL, AIDP…GMSL, LGVL…LVVI, MQFA…FSTA, and ALLL…MKGI. The RCK N-terminal domain maps to 400–519; sequence KPQVIVVGFG…AGVTQFSRET (120 aa).

The protein belongs to the monovalent cation:proton antiporter 2 (CPA2) transporter (TC 2.A.37) family. KefB subfamily. As to quaternary structure, interacts with the regulatory subunit KefG.

It is found in the cell inner membrane. Pore-forming subunit of a potassium efflux system that confers protection against electrophiles. Catalyzes K(+)/H(+) antiport. The chain is Glutathione-regulated potassium-efflux system protein KefB from Salmonella enteritidis PT4 (strain P125109).